We begin with the raw amino-acid sequence, 160 residues long: Thy-1 membrane glycoprotein (160 aa).

The signal sequence occupies residues 1-19 (MNPTVSIAVILTVLQAAHC). Q20 bears the Pyrrolidone carboxylic acid mark. An Ig-like V-type domain is found at 20-120 (QMIRDLSACL…YTGNQIKNIT (101 aa)). Cystine bridges form between C28–C129 and C38–C103. Residues N42, N78, and N118 are each glycosylated (N-linked (GlcNAc...) asparagine). The GPI-anchor amidated cysteine moiety is linked to residue C129. The propeptide at 130–160 (VRLSLLIQNTSWLLLLLLSLPLLQAVDFVSL) is removed in mature form. N138 carries N-linked (GlcNAc...) asparagine glycosylation.

In terms of processing, the N-terminus is blocked. In terms of tissue distribution, forebrain, cerebellum and tectum.

It localises to the cell membrane. Functionally, may play a role in cell-cell or cell-ligand interactions during synaptogenesis and other events in the brain. This chain is Thy-1 membrane glycoprotein (THY1), found in Gallus gallus (Chicken).